We begin with the raw amino-acid sequence, 266 residues long: Zinc finger protein SNAI2 (266 aa).

The interval 1–20 is SNAG domain; sequence MPRSFLVKKHFNSAKKPNYG. A disordered region spans residues 75–115; sequence SGYPSSLGRVSPPPQSDTSSKDHSGSESPISDEEERLQTKL. 4 C2H2-type zinc fingers span residues 126–148, 157–179, 183–205, and 211–233; these read FQCSLCSKTYSTFSGLAKHKQLH, FSCKYCEKEYVSLGALKMHIRTH, CVCKICGKAFSRPWLLQGHIRTH, and FSCPHCNRAFADRSNLRAHLQTH. The segment at 239–262 adopts a C2H2-type 5; atypical zinc-finger fold; the sequence is YQCKNCSKTFSRMSLLHKHEESGC.

Belongs to the snail C2H2-type zinc-finger protein family. As to quaternary structure, interacts (via SNAG domain) with limd1 (via LIM domains), wtip (via LIM domains) and ajuba (via LIM domains). Interacts with elp3. In terms of tissue distribution, first expressed on the lateral side of stage 12 embryos. At stage 14, strongly expressed in the lateral neural folds. At stage 16, expressed in pre-migratory neural crest cells. At stage 18, expression is dispersed over the neural plate in a pattern surrounding the rhombomeres. At stage 22, expressed in neural crest derivatives, including the branchial arches and the tissues surrounding the eyes and forebrain. After stage 17, expression is weak in the lateral plate mesoderm, increasing at stage 26, but was down-regulated in the pronephros region at stage 26.

The protein resides in the nucleus. Its function is as follows. Probable transcriptional repressor. Acts downstream of snai1 in the specification of the neural crest and neural crest migration. This chain is Zinc finger protein SNAI2 (snai2), found in Xenopus laevis (African clawed frog).